Reading from the N-terminus, the 320-residue chain is Cytochrome f (320 aa).

Positions 1-35 (MQTRKTLSWIKEEITRSISVSLMIYIITGAYISNA) are cleaved as a signal peptide. Tyrosine 36, cysteine 56, cysteine 59, and histidine 60 together coordinate heme. The helical transmembrane segment at 286–306 (VQGLLFFLASVILAQIFLVLK) threads the bilayer.

Belongs to the cytochrome f family. As to quaternary structure, the 4 large subunits of the cytochrome b6-f complex are cytochrome b6, subunit IV (17 kDa polypeptide, petD), cytochrome f and the Rieske protein, while the 4 small subunits are PetG, PetL, PetM and PetN. The complex functions as a dimer. It depends on heme as a cofactor.

Its subcellular location is the plastid. It localises to the chloroplast thylakoid membrane. Functionally, component of the cytochrome b6-f complex, which mediates electron transfer between photosystem II (PSII) and photosystem I (PSI), cyclic electron flow around PSI, and state transitions. This chain is Cytochrome f, found in Populus trichocarpa (Western balsam poplar).